Consider the following 975-residue polypeptide: Kinesin-like protein KIN-14K (975 aa).

Residues 1–40 (MKNRIKKGSSMIGVYGRSDGSSSIQSSNGSESRESIDDNK) form a disordered region. A compositionally biased stretch (low complexity) spans 17–30 (RSDGSSSIQSSNGS). Basic and acidic residues predominate over residues 31-40 (ESRESIDDNK). Positions 40-143 (KQGHQSLVEW…SLKALKASFS (104 aa)) constitute a Calponin-homology (CH) domain. Residues 289–345 (KERSNAELSKLKQELEIVKETHEKQFLELKLNAQKAKVELERQVKNSELRVVEAKEL) are a coiled coil. One can recognise a Kinesin motor domain in the interval 436–746 (NIRVYCRIRP…LKFAERVSGV (311 aa)). 520–527 (GQTGSGKT) lines the ATP pocket. The stretch at 757 to 788 (GRDVRQLMEQVSNLKDMIAKKDEELQKFQNIN) forms a coiled coil. 2 disordered regions span residues 801 to 852 (VSPP…GAKD) and 900 to 975 (LFPE…NRKR). The segment covering 944 to 958 (LSISTTSSKALTSSK) has biased composition (low complexity).

The protein belongs to the TRAFAC class myosin-kinesin ATPase superfamily. Kinesin family. KIN-14 subfamily.

This is Kinesin-like protein KIN-14K from Arabidopsis thaliana (Mouse-ear cress).